Consider the following 156-residue polypeptide: ATP synthase subunit b (156 aa).

Residues 12-32 (VAFLIFVLFCMKYVWPPVITA) form a helical membrane-spanning segment.

It belongs to the ATPase B chain family. F-type ATPases have 2 components, F(1) - the catalytic core - and F(0) - the membrane proton channel. F(1) has five subunits: alpha(3), beta(3), gamma(1), delta(1), epsilon(1). F(0) has three main subunits: a(1), b(2) and c(10-14). The alpha and beta chains form an alternating ring which encloses part of the gamma chain. F(1) is attached to F(0) by a central stalk formed by the gamma and epsilon chains, while a peripheral stalk is formed by the delta and b chains.

It is found in the cell inner membrane. Its function is as follows. F(1)F(0) ATP synthase produces ATP from ADP in the presence of a proton or sodium gradient. F-type ATPases consist of two structural domains, F(1) containing the extramembraneous catalytic core and F(0) containing the membrane proton channel, linked together by a central stalk and a peripheral stalk. During catalysis, ATP synthesis in the catalytic domain of F(1) is coupled via a rotary mechanism of the central stalk subunits to proton translocation. Functionally, component of the F(0) channel, it forms part of the peripheral stalk, linking F(1) to F(0). This is ATP synthase subunit b from Pseudomonas putida (strain GB-1).